The sequence spans 87 residues: Cyclin-dependent kinases regulatory subunit 1 (87 aa).

This sequence belongs to the CKS family. In terms of assembly, interacts with CDKA-1. Interacts with CDKB1-1, CDKB1-2 and CDKB2-1. Interacts with CYCD2-1 and At4g14310.

Functionally, associates with cyclin-dependent kinases (CDKs) and plays an essential role in the regulation of the cell cycle that affects plant growth rate. May inhibit both the G1/S and G2/M phases. This is Cyclin-dependent kinases regulatory subunit 1 (CKS1) from Arabidopsis thaliana (Mouse-ear cress).